A 232-amino-acid chain; its full sequence is MKIGIIGAMEEEVTLLRDKIDNRQTITLGGCEIYTGQLNGTEVALLKSGIGKVAAALGATLLLEHCKPDVIINTGSAGGLASTLKVGDIVVSDEARYHDADVTAFGYEYGQLPGCPAGFKADDKLIAAAESCIRELNLNAVRGLIVSGDAFINGSVGLAKIRHNFPDAVAVEMEATAIAHVCYNFNVPFVVVRAISDVADQQSHLSFDEFLAVAAKQSTLMVETLVQKLAHG.

The Proton acceptor role is filled by glutamate 12. Residues glycine 78, isoleucine 152, and 173-174 (ME) contribute to the substrate site. Aspartate 197 functions as the Proton donor in the catalytic mechanism.

The protein belongs to the PNP/UDP phosphorylase family. MtnN subfamily. As to quaternary structure, homodimer.

The enzyme catalyses S-adenosyl-L-homocysteine + H2O = S-(5-deoxy-D-ribos-5-yl)-L-homocysteine + adenine. The catalysed reaction is S-methyl-5'-thioadenosine + H2O = 5-(methylsulfanyl)-D-ribose + adenine. It catalyses the reaction 5'-deoxyadenosine + H2O = 5-deoxy-D-ribose + adenine. The protein operates within amino-acid biosynthesis; L-methionine biosynthesis via salvage pathway; S-methyl-5-thio-alpha-D-ribose 1-phosphate from S-methyl-5'-thioadenosine (hydrolase route): step 1/2. Catalyzes the irreversible cleavage of the glycosidic bond in both 5'-methylthioadenosine (MTA) and S-adenosylhomocysteine (SAH/AdoHcy) to adenine and the corresponding thioribose, 5'-methylthioribose and S-ribosylhomocysteine, respectively. Also cleaves 5'-deoxyadenosine, a toxic by-product of radical S-adenosylmethionine (SAM) enzymes, into 5-deoxyribose and adenine. Thus, is required for in vivo function of the radical SAM enzymes biotin synthase and lipoic acid synthase, that are inhibited by 5'-deoxyadenosine accumulation. This chain is 5'-methylthioadenosine/S-adenosylhomocysteine nucleosidase, found in Salmonella agona (strain SL483).